An 83-amino-acid polypeptide reads, in one-letter code: Small ribosomal subunit protein bS16 (83 aa).

The protein belongs to the bacterial ribosomal protein bS16 family.

The chain is Small ribosomal subunit protein bS16 from Azotobacter vinelandii (strain DJ / ATCC BAA-1303).